We begin with the raw amino-acid sequence, 398 residues long: Acetate kinase (398 aa).

A Mg(2+)-binding site is contributed by Asn7. Lys14 contributes to the ATP binding site. A substrate-binding site is contributed by Arg91. Residue Asp148 is the Proton donor/acceptor of the active site. Residues 208-212 (HIGNG), 283-285 (DLR), and 331-335 (GVGEN) contribute to the ATP site. Glu385 is a binding site for Mg(2+).

The protein belongs to the acetokinase family. Homodimer. Mg(2+) serves as cofactor. It depends on Mn(2+) as a cofactor.

The protein localises to the cytoplasm. It carries out the reaction acetate + ATP = acetyl phosphate + ADP. The protein operates within metabolic intermediate biosynthesis; acetyl-CoA biosynthesis; acetyl-CoA from acetate: step 1/2. Catalyzes the formation of acetyl phosphate from acetate and ATP. Can also catalyze the reverse reaction. The protein is Acetate kinase of Porphyromonas gingivalis (strain ATCC 33277 / DSM 20709 / CIP 103683 / JCM 12257 / NCTC 11834 / 2561).